The sequence spans 345 residues: Protein RecA (345 aa).

67-74 (GPESSGKT) lines the ATP pocket.

It belongs to the RecA family.

Its subcellular location is the cytoplasm. Can catalyze the hydrolysis of ATP in the presence of single-stranded DNA, the ATP-dependent uptake of single-stranded DNA by duplex DNA, and the ATP-dependent hybridization of homologous single-stranded DNAs. It interacts with LexA causing its activation and leading to its autocatalytic cleavage. This chain is Protein RecA, found in Acidothermus cellulolyticus (strain ATCC 43068 / DSM 8971 / 11B).